Here is a 343-residue protein sequence, read N- to C-terminus: tRNA N6-adenosine threonylcarbamoyltransferase (343 aa).

Fe cation contacts are provided by histidine 111 and histidine 115. Substrate is bound by residues 135–139, aspartate 168, glycine 181, and asparagine 280; that span reads VLSGG. A Fe cation-binding site is contributed by aspartate 306.

The protein belongs to the KAE1 / TsaD family. The cofactor is Fe(2+).

It is found in the cytoplasm. The enzyme catalyses L-threonylcarbamoyladenylate + adenosine(37) in tRNA = N(6)-L-threonylcarbamoyladenosine(37) in tRNA + AMP + H(+). In terms of biological role, required for the formation of a threonylcarbamoyl group on adenosine at position 37 (t(6)A37) in tRNAs that read codons beginning with adenine. Is involved in the transfer of the threonylcarbamoyl moiety of threonylcarbamoyl-AMP (TC-AMP) to the N6 group of A37, together with TsaE and TsaB. TsaD likely plays a direct catalytic role in this reaction. The polypeptide is tRNA N6-adenosine threonylcarbamoyltransferase (Protochlamydia amoebophila (strain UWE25)).